The primary structure comprises 205 residues: Holliday junction branch migration complex subunit RuvA (205 aa).

The tract at residues 1 to 64 (MIGRLRGIIL…EDAQLLFGFN (64 aa)) is domain I. The domain II stretch occupies residues 65 to 143 (DKQERALFRE…GLSGDLFNSV (79 aa)). A flexible linker region spans residues 144-156 (SDIPLTSPANVDN). Positions 157–205 (RVGEPEAEAAAALVALGYKPQEASRMISKIARPDADCETLIRDALRAAL) are domain III.

This sequence belongs to the RuvA family. In terms of assembly, homotetramer. Forms an RuvA(8)-RuvB(12)-Holliday junction (HJ) complex. HJ DNA is sandwiched between 2 RuvA tetramers; dsDNA enters through RuvA and exits via RuvB. An RuvB hexamer assembles on each DNA strand where it exits the tetramer. Each RuvB hexamer is contacted by two RuvA subunits (via domain III) on 2 adjacent RuvB subunits; this complex drives branch migration. In the full resolvosome a probable DNA-RuvA(4)-RuvB(12)-RuvC(2) complex forms which resolves the HJ.

It localises to the cytoplasm. In terms of biological role, the RuvA-RuvB-RuvC complex processes Holliday junction (HJ) DNA during genetic recombination and DNA repair, while the RuvA-RuvB complex plays an important role in the rescue of blocked DNA replication forks via replication fork reversal (RFR). RuvA specifically binds to HJ cruciform DNA, conferring on it an open structure. The RuvB hexamer acts as an ATP-dependent pump, pulling dsDNA into and through the RuvAB complex. HJ branch migration allows RuvC to scan DNA until it finds its consensus sequence, where it cleaves and resolves the cruciform DNA. This chain is Holliday junction branch migration complex subunit RuvA, found in Pectobacterium atrosepticum (strain SCRI 1043 / ATCC BAA-672) (Erwinia carotovora subsp. atroseptica).